A 79-amino-acid chain; its full sequence is RNA-binding protein KhpA (79 aa).

One can recognise a KH domain in the interval 32–79 (TVVIELRVDPAELGKVIGKQGRIARALRTILTAIGRKIGKRVVLEILE).

This sequence belongs to the KhpA RNA-binding protein family.

It localises to the cytoplasm. In terms of biological role, a probable RNA-binding protein. The protein is RNA-binding protein KhpA of Aquifex aeolicus (strain VF5).